A 217-amino-acid chain; its full sequence is Transcription antitermination protein NusB (217 aa).

Belongs to the NusB family.

Functionally, involved in transcription antitermination. Required for transcription of ribosomal RNA (rRNA) genes. Binds specifically to the boxA antiterminator sequence of the ribosomal RNA (rrn) operons. The sequence is that of Transcription antitermination protein NusB from Microcystis aeruginosa (strain NIES-843 / IAM M-2473).